Consider the following 1284-residue polypeptide: Integrator complex subunit 6 (1284 aa).

The VWFA domain maps to 3–134 (IILFLVDTSS…PSVIIVITDG (132 aa)). Disordered regions lie at residues 653 to 824 (DVAP…GMSN), 864 to 895 (ETGETEAVPGGASLPGASSANEPSSIGASPAV), 1053 to 1086 (TSSGSSVGAGASNSNLNGNGSTESGGGVSSDDHA), and 1125 to 1180 (NNSS…PGQS). Gly residues predominate over residues 690 to 721 (SPGGGSGPGMPGMPGMGGGMSGLMLGAGGSGG). Low complexity-rich tracts occupy residues 752 to 781 (DSRSSSSGSESSTTGSAPGSPIPGATSSIS) and 803 to 824 (NSNSSFVSSTSEASASDSGMSN). Positions 879–890 (GASSANEPSSIG) are enriched in polar residues. 2 stretches are compositionally biased toward low complexity: residues 1053–1074 (TSSGSSVGAGASNSNLNGNGST) and 1125–1141 (NNSSAAGAASGSTLSNN). The segment covering 1159–1171 (INSSCGSSPTHNN) has biased composition (polar residues).

Belongs to the Integrator subunit 6 family. Belongs to the multiprotein complex Integrator, at least composed of IntS1, IntS2, IntS3, IntS4, omd/IntS5, IntS6, defl/IntS7, IntS8, IntS9, IntS10, IntS11, IntS12, asun/IntS13, IntS14 and IntS15. The core complex associates with protein phosphatase 2A subunits mts/PP2A and Pp2A-29B, to form the Integrator-PP2A (INTAC) complex.

The protein resides in the nucleus. In terms of biological role, component of the integrator complex, a multiprotein complex that terminates RNA polymerase II (Pol II) transcription in the promoter-proximal region of genes. The integrator complex provides a quality checkpoint during transcription elongation by driving premature transcription termination of transcripts that are unfavorably configured for transcriptional elongation: the complex terminates transcription by (1) catalyzing dephosphorylation of the C-terminal domain (CTD) of Pol II subunit Polr2A/Rbp1 and Spt5, and (2) degrading the exiting nascent RNA transcript via endonuclease activity. The integrator complex is also involved in the 3'-end processing of the U7 snRNA, and also the spliceosomal snRNAs U1, U2, U4 and U5. Within the integrator complex, IntS6 acts as a substrate adapter for protein phosphatase 2A (PP2A). In Drosophila melanogaster (Fruit fly), this protein is Integrator complex subunit 6.